A 190-amino-acid polypeptide reads, in one-letter code: Peptidyl-tRNA hydrolase (190 aa).

Tyr18 is a binding site for tRNA. His23 serves as the catalytic Proton acceptor. Residues Phe67, Asn69, and Asn115 each contribute to the tRNA site.

It belongs to the PTH family. Monomer.

Its subcellular location is the cytoplasm. The catalysed reaction is an N-acyl-L-alpha-aminoacyl-tRNA + H2O = an N-acyl-L-amino acid + a tRNA + H(+). Hydrolyzes ribosome-free peptidyl-tRNAs (with 1 or more amino acids incorporated), which drop off the ribosome during protein synthesis, or as a result of ribosome stalling. Functionally, catalyzes the release of premature peptidyl moieties from peptidyl-tRNA molecules trapped in stalled 50S ribosomal subunits, and thus maintains levels of free tRNAs and 50S ribosomes. In Leptospira interrogans serogroup Icterohaemorrhagiae serovar Lai (strain 56601), this protein is Peptidyl-tRNA hydrolase.